Reading from the N-terminus, the 374-residue chain is UPF0754 membrane protein SA1664 (374 aa).

2 helical membrane passes run 4-24 (LFII…TNVI) and 354-374 (SLGF…AIFV).

This sequence belongs to the UPF0754 family.

The protein resides in the cell membrane. The sequence is that of UPF0754 membrane protein SA1664 from Staphylococcus aureus (strain N315).